The chain runs to 312 residues: uncharacterized protein (312 aa).

This sequence belongs to the asfivirus CP312R family.

Its subcellular location is the virion. This is an uncharacterized protein from African swine fever virus (isolate Tick/South Africa/Pretoriuskop Pr4/1996) (ASFV).